The primary structure comprises 442 residues: Pyruvate dehydrogenase complex protein X component, mitochondrial (442 aa).

The transit peptide at 1 to 35 (MASLAAACRVSARLAARKLQHDAAVRGFRSSAAAL) directs the protein to the mitochondrion. Residues 37 to 113 (AQNFMMPALS…QVGTRIAVVA (77 aa)) enclose the Lipoyl-binding domain. The residue at position 78 (Lys-78) is an N6-lipoyllysine. Positions 119–169 (ITKLEIPPDEGPQQLKAAAPAPAPTPAPAPASPQPQFAAPTPSPPKASTKV) are disordered. Residues 139–151 (APAPTPAPAPASP) are compositionally biased toward pro residues. Low complexity predominate over residues 152 to 169 (QPQFAAPTPSPPKASTKV). Residues 175 to 215 (PLLPSVHQLIKENGLDESAVSNITPTGPGGRILKGDVLAYL) enclose the Peripheral subunit-binding (PSBD) domain. Residues 244–269 (AKPVEPEKPQEEKASAPAPAPRAPEP) are disordered. Basic and acidic residues predominate over residues 245-257 (KPVEPEKPQEEKA). The segment at 317–336 (PLPTNYQPTADELFDQVLGL) is interaction to the E2 core.

This sequence belongs to the 2-oxoacid dehydrogenase family. In terms of assembly, eukaryotic pyruvate dehydrogenase (PDH) complexes are organized as a core consisting of the oligomeric dihydrolipoamide acetyl-transferase (E2), around which are arranged multiple copies of pyruvate dehydrogenase (E1), dihydrolipoamide dehydrogenase (E3) and protein X (E3BP) bound by non-covalent bonds. The Chaetomium thermophilum PDH complex contains 60 E2 units, 12 E3BP units, about 20 E1 units, and 12 or more E3 units. The units are organized in 1 E2 60-mer, 4 E3BP trimers, about 20 E1 tetramers, and a maximum of 12 E3 dimers. The E3BP trimers are bound inside the icosahedral core with tetrahedral symmetry.

The protein localises to the mitochondrion. Functionally, the 10-megadalton pyruvate dehydrogenase complex contains multiple copies of three enzymatic components: pyruvate dehydrogenase (E1), dihydrolipoamide acetyltransferase (E2) and lipoamide dehydrogenase (E3) and catalyzes the overall oxidative decarboxylation of pyruvate to form acetyl-CoA and CO(2). E3BP is responsible for tethering E3 in proximity to the core, forming the entire metabolon, and the number of E3s is limited by the number of E3BPs. Within the complex, pyruvate and thiamine pyrophosphate (TPP or vitamin B1) are bound by pyruvate dehydrogenase E1 subunits alpha and beta and pyruvate is decarboxylated leading to the 2-carbon hydrohyethyl bound to TPP. The E2 component contains covalently-bound lipoyl cofactors and transfers the hydroxyethyl group from TPP to an oxidized form of covalently bound lipoamide, and the resulting acetyl group is then transferred to free coenzyme A to form acetyl-CoA and reduced dihydrolipoamide-E2. Finally, the flavoprotein dihydrolipoamide dehydrogenase (E3) re-oxidizes the lipoyl group of dihydrolipoamide-E2 to form lipoamide-E2 and NADH. A fourth subunit, E3BP, is responsible for tethering E3 in proximity to the core, forming the entire metabolon. The protein is Pyruvate dehydrogenase complex protein X component, mitochondrial of Chaetomium thermophilum (strain DSM 1495 / CBS 144.50 / IMI 039719) (Thermochaetoides thermophila).